A 427-amino-acid polypeptide reads, in one-letter code: Glucose-6-phosphate isomerase (427 aa).

Catalysis depends on Glu281, which acts as the Proton donor. Residues His302 and Lys417 contribute to the active site.

This sequence belongs to the GPI family.

It is found in the cytoplasm. The catalysed reaction is alpha-D-glucose 6-phosphate = beta-D-fructose 6-phosphate. It participates in carbohydrate biosynthesis; gluconeogenesis. Its pathway is carbohydrate degradation; glycolysis; D-glyceraldehyde 3-phosphate and glycerone phosphate from D-glucose: step 2/4. In terms of biological role, catalyzes the reversible isomerization of glucose-6-phosphate to fructose-6-phosphate. The protein is Glucose-6-phosphate isomerase of Mycoplasmopsis pulmonis (strain UAB CTIP) (Mycoplasma pulmonis).